A 402-amino-acid polypeptide reads, in one-letter code: Speedy protein E21 (402 aa).

The segment at 1-90 is disordered; the sequence is MDRTETRFRK…EPEKELAPEP (90 aa). Polar residues predominate over residues 16–39; the sequence is GKITTSRQLHPQNEQSPQRSTSGY. Positions 76–90 are enriched in acidic residues; sequence DESEEEPEKELAPEP.

The protein belongs to the Speedy/Ringo family.

This chain is Speedy protein E21, found in Homo sapiens (Human).